The following is an 80-amino-acid chain: Gamma-conotoxin-like Am6.6 (80 aa).

The first 19 residues, 1-19 (MEKLTILLLVAAILMSTQA), serve as a signal peptide directing secretion. Positions 20–45 (LNQEQRQQAKINLLSKKKPSAERWRR) are excised as a propeptide. Cystine bridges form between cysteine 47–cysteine 61, cysteine 54–cysteine 65, and cysteine 60–cysteine 70. 4-carboxyglutamate occurs at positions 56 and 59. Glutamate 71 is modified (4-carboxyglutamate). Proline 76 carries the 4-hydroxyproline modification. A propeptide spanning residues 78–80 (RAI) is cleaved from the precursor.

The protein belongs to the conotoxin O2 family. In terms of tissue distribution, expressed by the venom duct.

Its subcellular location is the secreted. Its function is as follows. Gamma-conotoxins may act on voltage-gated non-specific cation pacemaker channels (HCN). The chain is Gamma-conotoxin-like Am6.6 from Conus amadis (Amadis cone).